A 974-amino-acid chain; its full sequence is GATOR2 complex protein WDR59 (974 aa).

WD repeat units lie at residues 57 to 98 (QSKW…GEVG), 103 to 143 (GHTR…KPTV), 146 to 185 (SAVA…TAVE), 189 to 229 (AHLS…KYLN), 232 to 276 (PCQV…TPVH), 278 to 318 (FVGH…RVDS), and 319 to 362 (QMQR…TASH). Residues 350-374 (HTEDTDHQHTASHGEEEALKEDPPR) are disordered. The 102-residue stretch at 393-494 (QEFSLINVQI…RQLVSCLESF (102 aa)) folds into the RWD domain. Ser564 is subject to Phosphoserine. A WD 8 repeat occupies 668–706 (LNVNDIQETCQKNAASALLVGRKDLVQVWSLATVATDLC). Phosphoserine is present on residues Ser821, Ser822, and Ser830. The tract at residues 831–852 (LTYSDPRERERDQHDKNKRLLD) is disordered. A compositionally biased stretch (basic and acidic residues) spans 835-851 (DPRERERDQHDKNKRLL). A C4-type zinc finger spans residues 901 to 920 (YCSHCRSEVRGTQCAICKGF). Zn(2+)-binding residues include Cys902, Cys905, Cys914, Cys917, Cys927, Cys938, His943, His946, His949, Cys960, Cys964, Cys966, and Cys968. The segment at 921-973 (TFQCAICHVAVRGSSNFCLTCGHGGHTSHMMEWFRTQEVCPTGCGCHCLLEST) adopts an RING-type; atypical zinc-finger fold.

It belongs to the WD repeat WDR59 family. As to quaternary structure, component of the GATOR2 subcomplex, composed of MIOS, SEC13, SEH1L, WDR24 and WDR59. The GATOR2 complex interacts with CASTOR1 and CASTOR2; the interaction is negatively regulated by arginine. The GATOR2 complex interacts with SESN1, SESN2 and SESN3; the interaction is negatively regulated by amino acids. Interacts with DDB1-CUL4A/B E3 ligase complexes.

It is found in the lysosome membrane. With respect to regulation, the GATOR2 complex is negatively regulated by the upstream amino acid sensors CASTOR1 and SESN2, which sequester the GATOR2 complex in absence of amino acids. In the presence of abundant amino acids, GATOR2 is released from CASTOR1 and SESN2 and activated. Its function is as follows. As a component of the GATOR2 complex, functions as an activator of the amino acid-sensing branch of the mTORC1 signaling pathway. The GATOR2 complex indirectly activates mTORC1 through the inhibition of the GATOR1 subcomplex. GATOR2 probably acts as an E3 ubiquitin-protein ligase toward GATOR1. In the presence of abundant amino acids, the GATOR2 complex mediates ubiquitination of the NPRL2 core component of the GATOR1 complex, leading to GATOR1 inactivation. In the absence of amino acids, GATOR2 is inhibited, activating the GATOR1 complex. The polypeptide is GATOR2 complex protein WDR59 (Homo sapiens (Human)).